A 196-amino-acid polypeptide reads, in one-letter code: Chromophore lyase CpcT/CpeT (196 aa).

This sequence belongs to the CpcT/CpeT biliprotein lyase family.

Functionally, covalently attaches a chromophore to Cys residue(s) of phycobiliproteins. This is Chromophore lyase CpcT/CpeT from Synechococcus sp. (strain WH8020).